A 94-amino-acid polypeptide reads, in one-letter code: Small ribosomal subunit protein bS6 (94 aa).

This sequence belongs to the bacterial ribosomal protein bS6 family.

In terms of biological role, binds together with bS18 to 16S ribosomal RNA. This Phytoplasma mali (strain AT) protein is Small ribosomal subunit protein bS6.